The primary structure comprises 201 residues: Putative lipoprotein LppC (201 aa).

An N-terminal signal peptide occupies residues 1–23 (MTSTLHRTPLATAGLALVVALGG). Residue C24 is the site of N-palmitoyl cysteine attachment. C24 carries the S-diacylglycerol cysteine lipid modification. Prevents bacterial uptake by a human macrophage-like cell line stretches follow at residues 77–96 (GANV…AELA), 97–116 (LVVD…IVTG), and 117–136 (IAPG…GHSV). The disordered stretch occupies residues 122–141 (GSTADGQTPAGGHSVPNSGG).

Belongs to the UPF0098 family.

It localises to the cell membrane. It is found in the cell surface. Its function is as follows. Probably involved in bacterial recognition and uptake by its host (human). This chain is Putative lipoprotein LppC, found in Mycobacterium tuberculosis (strain ATCC 25618 / H37Rv).